The sequence spans 237 residues: Carbonyl reductase family member 4 (237 aa).

NADP(+) is bound by residues 11–14 (SRGI), 34–35 (RN), D57, and 84–86 (AAG). A substrate-binding site is contributed by S135. NADP(+) contacts are provided by residues Y148, K152, and 181–183 (IHT). Residue Y148 is the Proton acceptor of the active site.

It belongs to the short-chain dehydrogenases/reductases (SDR) family. As to quaternary structure, homotetramer (in vitro). Heterotetramer with HSD17B8; contains two molecules each of HSD17B8 and CBR4.

It localises to the mitochondrion matrix. Its pathway is lipid metabolism; fatty acid biosynthesis. Functionally, the heterotetramer with HSD17B8 has NADH-dependent 3-ketoacyl-acyl carrier protein reductase activity, and thereby plays a role in mitochondrial fatty acid biosynthesis. Within the heterotetramer, HSD17B8 binds NADH; CBR4 binds NADPD. The homotetramer has NADPH-dependent quinone reductase activity. Both homotetramer and the heterotetramer have broad in vitro substrate specificity and can reduce 9,10-phenanthrenequinone, 1,4-benzoquinone and various other o-quinones and p-quinones. This Danio rerio (Zebrafish) protein is Carbonyl reductase family member 4 (cbr4).